The primary structure comprises 353 residues: tRNA-cytidine(32) 2-sulfurtransferase (353 aa).

The PP-loop motif motif lies at 49 to 54; the sequence is SGGKDS. Positions 124, 127, and 215 each coordinate [4Fe-4S] cluster.

This sequence belongs to the TtcA family. In terms of assembly, homodimer. It depends on Mg(2+) as a cofactor. The cofactor is [4Fe-4S] cluster.

The protein localises to the cytoplasm. It carries out the reaction cytidine(32) in tRNA + S-sulfanyl-L-cysteinyl-[cysteine desulfurase] + AH2 + ATP = 2-thiocytidine(32) in tRNA + L-cysteinyl-[cysteine desulfurase] + A + AMP + diphosphate + H(+). The protein operates within tRNA modification. Its function is as follows. Catalyzes the ATP-dependent 2-thiolation of cytidine in position 32 of tRNA, to form 2-thiocytidine (s(2)C32). The sulfur atoms are provided by the cysteine/cysteine desulfurase (IscS) system. This Sodalis glossinidius (strain morsitans) protein is tRNA-cytidine(32) 2-sulfurtransferase.